The primary structure comprises 243 residues: Triosephosphate isomerase (243 aa).

Substrate is bound at residue 9 to 11; it reads NWK. The active-site Electrophile is histidine 96. Glutamate 165 acts as the Proton acceptor in catalysis. Substrate-binding positions include glycine 171, serine 204, and 225-226; that span reads GG.

Belongs to the triosephosphate isomerase family. In terms of assembly, homodimer.

The protein resides in the cytoplasm. It carries out the reaction D-glyceraldehyde 3-phosphate = dihydroxyacetone phosphate. It functions in the pathway carbohydrate biosynthesis; gluconeogenesis. The protein operates within carbohydrate degradation; glycolysis; D-glyceraldehyde 3-phosphate from glycerone phosphate: step 1/1. Its function is as follows. Involved in the gluconeogenesis. Catalyzes stereospecifically the conversion of dihydroxyacetone phosphate (DHAP) to D-glyceraldehyde-3-phosphate (G3P). This is Triosephosphate isomerase from Synechococcus sp. (strain CC9902).